Reading from the N-terminus, the 224-residue chain is Cysteine S-methyltransferase NleE (224 aa).

Residues 49–52 (GITR) are interaction with host proteins TAB2, TAB3 and ZRANB3. S-adenosyl-L-methionine is bound by residues A92, S98, R107, Q111, Y204, and E208.

It belongs to the NleE/OspZ family. As to quaternary structure, monomer.

It is found in the secreted. Its subcellular location is the host nucleus. It catalyses the reaction L-cysteinyl-[protein] + S-adenosyl-L-methionine = S-methyl-L-cysteinyl-[protein] + S-adenosyl-L-homocysteine + H(+). Its function is as follows. Cysteine methyltransferase effector that inhibits host cell NF-kappa-B activation by preventing nuclear translocation of host protein RELA/p65. Acts by mediating cysteine methylation of host proteins TAB2 and TAB3: methylation of a conserved cysteine residue of the RanBP2-type zinc finger (NZF) of TAB2 and TAB3 disrupts zinc-binding, thereby inactivating the ubiquitin chain-binding activity of TAB2 and TAB3, leading to NF-kappa-B inactivation. Also mediates cysteine methylation of host protein ZRANB3, inactivating its ability to bind ubiquitin chains. The chain is Cysteine S-methyltransferase NleE from Escherichia coli O157:H7.